Here is a 367-residue protein sequence, read N- to C-terminus: GTP cyclohydrolase FolE2 (367 aa).

It belongs to the GTP cyclohydrolase IV family.

It carries out the reaction GTP + H2O = 7,8-dihydroneopterin 3'-triphosphate + formate + H(+). Its pathway is cofactor biosynthesis; 7,8-dihydroneopterin triphosphate biosynthesis; 7,8-dihydroneopterin triphosphate from GTP: step 1/1. In terms of biological role, converts GTP to 7,8-dihydroneopterin triphosphate. This is GTP cyclohydrolase FolE2 from Ruegeria pomeroyi (strain ATCC 700808 / DSM 15171 / DSS-3) (Silicibacter pomeroyi).